The primary structure comprises 144 residues: Cytochrome c-type biogenesis protein CcmE (144 aa).

The Cytoplasmic segment spans residues Met1 to Arg7. A helical; Signal-anchor for type II membrane protein membrane pass occupies residues Ala8–Ala28. Residues Leu29–Lys144 lie on the Periplasmic side of the membrane. Heme contacts are provided by His121 and Tyr125.

This sequence belongs to the CcmE/CycJ family.

It is found in the cell inner membrane. In terms of biological role, heme chaperone required for the biogenesis of c-type cytochromes. Transiently binds heme delivered by CcmC and transfers the heme to apo-cytochromes in a process facilitated by CcmF and CcmH. The polypeptide is Cytochrome c-type biogenesis protein CcmE (Polynucleobacter necessarius subsp. necessarius (strain STIR1)).